The following is a 428-amino-acid chain: Small ribosomal subunit protein uS2m (428 aa).

The disordered stretch occupies residues 30–50 (FLSQDNFTAPPPPPTNSKKQA).

This sequence belongs to the universal ribosomal protein uS2 family. As to quaternary structure, component of the mitochondrial small ribosomal subunit (mt-SSU). Mature N.crassa 74S mitochondrial ribosomes consist of a small (37S) and a large (54S) subunit. The 37S small subunit contains a 16S ribosomal RNA (16S mt-rRNA) and 32 different proteins. The 54S large subunit contains a 23S rRNA (23S mt-rRNA) and 42 different proteins.

The protein resides in the mitochondrion. Functionally, component of the mitochondrial ribosome (mitoribosome), a dedicated translation machinery responsible for the synthesis of mitochondrial genome-encoded proteins, including at least some of the essential transmembrane subunits of the mitochondrial respiratory chain. The mitoribosomes are attached to the mitochondrial inner membrane and translation products are cotranslationally integrated into the membrane. This Neurospora crassa (strain ATCC 24698 / 74-OR23-1A / CBS 708.71 / DSM 1257 / FGSC 987) protein is Small ribosomal subunit protein uS2m (mrp4).